Reading from the N-terminus, the 545-residue chain is DNA mismatch repair protein MutL (545 aa).

A disordered region spans residues 516–545; it reads GRRSGARGGGEARPRPQEESFPEAPLPREP.

It belongs to the DNA mismatch repair MutL/HexB family.

In terms of biological role, this protein is involved in the repair of mismatches in DNA. It is required for dam-dependent methyl-directed DNA mismatch repair. May act as a 'molecular matchmaker', a protein that promotes the formation of a stable complex between two or more DNA-binding proteins in an ATP-dependent manner without itself being part of a final effector complex. The polypeptide is DNA mismatch repair protein MutL (Thermus thermophilus (strain ATCC BAA-163 / DSM 7039 / HB27)).